A 394-amino-acid chain; its full sequence is MRMEGGGGGGHGHHGGGGGGHGHHGGIGGGEAQIKGTLTHGGRYVQYNVYGNLFEVSSKYVPPIRPVGRGACGIICAVVNAQTRQEVAIKKIGNAFDNQIDAKRTLREIKLLRHMDHDNVISIKDIIRPPRRENFNDVYIVYELMDTDLHHLLRSNQPLTDDHCQYFLYQVLRGLKYVHSANVLHRDLRPSNLLLNAKCDLKIGDFGLARTTNETDFMMEYVVTRWYRAPELLLNCSEYTAAIDIWSVGCILGEIVTREPLFPGKDYVHQLRLITELIGSPDDSSLGFLRSDNARRYVRSLPQYPKQQFRARFPTMSSGAMDLLERMLVFDPSKRITVDEALCHPYLASLHEIYDEPVCPAPFSFDFEQPSLTEEDIKEIIWREALKFNPEPIH.

The span at 1–31 (MRMEGGGGGGHGHHGGGGGGHGHHGGIGGGE) shows a compositional bias: gly residues. The tract at residues 1–33 (MRMEGGGGGGHGHHGGGGGGHGHHGGIGGGEAQ) is disordered. The region spanning 61–347 (VPPIRPVGRG…VDEALCHPYL (287 aa)) is the Protein kinase domain. ATP contacts are provided by residues 67 to 75 (VGRGACGII) and Lys-90. Asp-187 serves as the catalytic Proton acceptor. Position 221 is a phosphotyrosine (Tyr-221).

The protein belongs to the protein kinase superfamily. CMGC Ser/Thr protein kinase family. MAP kinase subfamily. Post-translationally, the phosphorylation on Tyr-221 activates the enzyme. A conserved Thr, which must also be phosphorylated to activate the enzyme in closely related sequences, is replaced by Met-219 in this sequence.

The enzyme catalyses L-seryl-[protein] + ATP = O-phospho-L-seryl-[protein] + ADP + H(+). It carries out the reaction L-threonyl-[protein] + ATP = O-phospho-L-threonyl-[protein] + ADP + H(+). The sequence is that of Mitogen-activated protein kinase 2 (MPK2) from Oryza sativa subsp. japonica (Rice).